The chain runs to 407 residues: uncharacterized protein (407 aa).

Disordered stretches follow at residues 1–64, 110–276, and 314–341; these read MSRK…EPFD, GFGP…YPQF, and QSRP…HNNP. The segment covering 7–32 has biased composition (polar residues); the sequence is KQSNPKRNYKNDNYFQENSYTMTNGF. Over residues 33-44 the composition is skewed to basic and acidic residues; sequence TKDKDGKPVEFK. Residues 122–137 show a composition bias toward acidic residues; the sequence is DSDSEYSDECLTDECS. Composition is skewed to polar residues over residues 138-147 and 184-201; these read DNYNKQSTDS and NFDN…NSQP. Over residues 209 to 231 the composition is skewed to low complexity; it reads SKSSSKSSKSNKSNKSSKSNKSS. Over residues 232 to 246 the composition is skewed to basic residues; the sequence is KSSKSKSNKHSKHKN. Basic and acidic residues predominate over residues 247–258; the sequence is KSDSSSDSDEKT. Basic residues-rich tracts occupy residues 259–270 and 316–341; these read HKHKDRRHRRGR and RPRK…HNNP.

This is an uncharacterized protein from Acanthamoeba polyphaga mimivirus (APMV).